Reading from the N-terminus, the 347-residue chain is MRVDLFDFELPQELIALRPAVPRDSARLLVAAGAGAIDDRIVRDLPQLLMPGDVLVFNDTRVIPAQLTGKRGEATVGVTLHKRLDLRRWQAFVRNAKRLAPGDTVDFGNDVSADVEDRADDGSFTFAFRGDEPVEVLLDRAGTMPLPPYIAGKRATDERDRDDYQTMFAREDGAVAAPTAALHFTSELIAALDERGVARQTLTLHVGAGTFLPVKADDTDDHRMHSEWGRIEHDTADRLNAAKSRGGRIIAVGTTSLRLLESATGEDGVIRTFAGDTDIFITPGYRFRAVDGLMTNFHLPKSTLMMLVSALMGRERMMDIYAHAIAQRYRFYSYGDSSLLIPEGNTK.

It belongs to the QueA family. Monomer.

It localises to the cytoplasm. The catalysed reaction is 7-aminomethyl-7-carbaguanosine(34) in tRNA + S-adenosyl-L-methionine = epoxyqueuosine(34) in tRNA + adenine + L-methionine + 2 H(+). Its pathway is tRNA modification; tRNA-queuosine biosynthesis. Its function is as follows. Transfers and isomerizes the ribose moiety from AdoMet to the 7-aminomethyl group of 7-deazaguanine (preQ1-tRNA) to give epoxyqueuosine (oQ-tRNA). This chain is S-adenosylmethionine:tRNA ribosyltransferase-isomerase, found in Erythrobacter litoralis (strain HTCC2594).